The following is a 147-amino-acid chain: NAD(P)H-quinone oxidoreductase subunit N (147 aa).

Belongs to the complex I NdhN subunit family. NDH-1 can be composed of about 15 different subunits; different subcomplexes with different compositions have been identified which probably have different functions.

It localises to the cellular thylakoid membrane. The catalysed reaction is a plastoquinone + NADH + (n+1) H(+)(in) = a plastoquinol + NAD(+) + n H(+)(out). It carries out the reaction a plastoquinone + NADPH + (n+1) H(+)(in) = a plastoquinol + NADP(+) + n H(+)(out). In terms of biological role, NDH-1 shuttles electrons from an unknown electron donor, via FMN and iron-sulfur (Fe-S) centers, to quinones in the respiratory and/or the photosynthetic chain. The immediate electron acceptor for the enzyme in this species is believed to be plastoquinone. Couples the redox reaction to proton translocation, and thus conserves the redox energy in a proton gradient. Cyanobacterial NDH-1 also plays a role in inorganic carbon-concentration. This chain is NAD(P)H-quinone oxidoreductase subunit N, found in Synechococcus sp. (strain JA-2-3B'a(2-13)) (Cyanobacteria bacterium Yellowstone B-Prime).